The chain runs to 284 residues: Alpha-S1-casein (284 aa).

The N-terminal stretch at 1 to 15 is a signal peptide; it reads MKLLILTCLVAAALA. Disordered stretches follow at residues 21 to 44 and 78 to 111; these read RRNAVSSQTQQENSSSEEQEIVKQ and SSAEEQATASAQEDSSSSSSSSEESKDAIPSATE. Low complexity-rich tracts occupy residues 24–36 and 78–99; these read AVSSQTQQENSSS and SSAEEQATASAQEDSSSSSSSS. Phosphoserine is present on residues Ser-79, Ser-93, Ser-94, Ser-95, Ser-96, Ser-97, Ser-98, and Ser-99. 10 repeat units span residues 138-143, 144-149, 150-155, 156-161, 162-167, 168-173, 174-179, 180-185, 186-191, and 192-197. The segment at 138–197 is 10 X 6 AA tandem repeats; the sequence is LLQQASLAQQASLAQQASLAQQALLAQQPSLAQQAALAQQASLAQQASLAQQASLAQKHH.

The protein belongs to the alpha-casein family. As to expression, mammary gland specific. Secreted in milk.

The protein localises to the secreted. Functionally, important role in the capacity of milk to transport calcium phosphate. The protein is Alpha-S1-casein (Csn1s1) of Rattus norvegicus (Rat).